The primary structure comprises 198 residues: Nucleoside triphosphate pyrophosphatase (198 aa).

Residue D72 is the Proton acceptor of the active site.

This sequence belongs to the Maf family. The cofactor is a divalent metal cation.

It localises to the cytoplasm. The catalysed reaction is a ribonucleoside 5'-triphosphate + H2O = a ribonucleoside 5'-phosphate + diphosphate + H(+). The enzyme catalyses a 2'-deoxyribonucleoside 5'-triphosphate + H2O = a 2'-deoxyribonucleoside 5'-phosphate + diphosphate + H(+). Nucleoside triphosphate pyrophosphatase. May have a dual role in cell division arrest and in preventing the incorporation of modified nucleotides into cellular nucleic acids. This Corynebacterium aurimucosum (strain ATCC 700975 / DSM 44827 / CIP 107346 / CN-1) (Corynebacterium nigricans) protein is Nucleoside triphosphate pyrophosphatase.